Reading from the N-terminus, the 1245-residue chain is Structural polyprotein (1245 aa).

A disordered region spans residues 1–106 (MNRGFFNMLG…KTKPGKRQRM (106 aa)). Residues 37–70 (GLASQIQQLTTAVSALVIGQATRPQNPRPRPPPR) are host transcription inhibition. The span at 38–49 (LASQIQQLTTAV) shows a compositional bias: polar residues. Residues 63 to 100 (PRPRPPPRQKKQAPKQPPKPKKPKPQEKKKKQPAKTKP) carry the Nuclear localization signal motif. Positions 67 to 106 (PPPRQKKQAPKQPPKPKKPKPQEKKKKQPAKTKPGKRQRM) are enriched in basic residues. The binding to the viral RNA stretch occupies residues 86-115 (KPQEKKKKQPAKTKPGKRQRMALKLEADRL). The interval 100–114 (PGKRQRMALKLEADR) is ribosome-binding. A Peptidase S3 domain is found at 114-264 (RLFDVKNEDG…KTTPEGTEEW (151 aa)). Residue His-141 is the Charge relay system of the active site. A Nuclear export signal motif is present at residues 146–156 (IDHPVLSKLKF). The interaction with spike glycoprotein E2 stretch occupies residues 157–162 (TKSSAY). Asp-163 acts as the Charge relay system in catalysis. Positions 185-195 (PEGFYNWHHGA) are dimerization of the capsid protein. Ser-215 acts as the Charge relay system in catalysis. The segment at 221–225 (DNSGR) is dimerization of the capsid protein. The interval 249–253 (SKGKT) is interaction with spike glycoprotein E2. Residues 265 to 279 (SAAPLVTAMCLLGNV) form a functions as an uncleaved signal peptide for the precursor of protein E3/E2 region. The N-linked (GlcNAc...) asparagine; by host glycan is linked to Asn-278. Cystine bridges form between Cys-283–Cys-289, Cys-480–Cys-594, Cys-529–Cys-554, and Cys-531–Cys-548. Over 329–690 (SVTDDFTLTS…HEIVQHYYHR (362 aa)) the chain is Extracellular. N-linked (GlcNAc...) asparagine; by host glycosylation is present at Asn-524. Residue Asn-646 is glycosylated (N-linked (GlcNAc...) asparagine; by host). The chain crosses the membrane as a helical span at residues 691–718 (HPVYTILAVASAAVAMMIGVTVAALCAC). An interaction with the capsid protein region spans residues 719–723 (KARRE). The Cytoplasmic segment spans residues 719–751 (KARRECLTPYALAPNAVIPTSLALLCCVRSANA). 3 S-palmitoyl cysteine; by host lipidation sites follow: Cys-724, Cys-744, and Cys-745. A disulfide bond links Cys-724 and Cys-745. Residues 752 to 763 (ETFTETMSYFWS) lie on the Extracellular side of the membrane. A helical membrane pass occupies residues 764–784 (NSQPFFWVQLCIPLAAVIVLM). A topological domain (cytoplasmic) is located at residue Arg-785. The chain crosses the membrane as a helical span at residues 786-806 (CCSCCLPFLVVAGAYLAKVDA). Residues 807 to 1214 (YEHATTVPNV…QAAISKTSWS (408 aa)) are Extracellular-facing. Intrachain disulfides connect Cys-855-Cys-920, Cys-868-Cys-900, Cys-869-Cys-902, and Cys-874-Cys-884. The E1 fusion peptide loop stretch occupies residues 890 to 907 (VYPFMWGGAQCFCDSENS). Asn-945 and Asn-1051 each carry an N-linked (GlcNAc...) asparagine; by host glycan. 4 cysteine pairs are disulfide-bonded: Cys-1065–Cys-1077, Cys-1107–Cys-1182, Cys-1112–Cys-1186, and Cys-1134–Cys-1176. A helical membrane pass occupies residues 1215–1239 (WLFALFGGASSLLIIGLTIFACSMM). Topologically, residues 1240–1245 (LTSTRR) are cytoplasmic.

In terms of assembly, homodimer. Homomultimer. Interacts with host karyopherin KPNA4; this interaction allows the nuclear import of the viral capsid protein. Interacts with spike glycoprotein E2. Interacts with host IRAK1; the interaction leads to inhibition of IRAK1-dependent signaling. The precursor of protein E3/E2 and E1 form a heterodimer shortly after synthesis. As to quaternary structure, the precursor of protein E3/E2 and E1 form a heterodimer shortly after synthesis. Processing of the precursor of protein E3/E2 into E2 and E3 results in a heterodimer of the spike glycoproteins E2 and E1. Spike at virion surface are constituted of a trimer of E2-E1 heterodimers. After target cell attachment and endocytosis, E1 change conformation to form homotrimers. E2-E1 heterodimers interact with host VLDLR or LRP8/APOER2 to mediate viral entry. Interacts with 6K protein. In terms of assembly, processing of the precursor of protein E3/E2 into E2 and E3 results in a heterodimer of the spike glycoproteins E2 and E1. Spike at virion surface are constituted of a trimer of E2-E1 heterodimers. E2-E1 heterodimers interact with host VLDLR or LRP8/APOER2 to mediate viral entry. Interacts with 6K protein. Interacts with the capsid protein. Oligomer. Interacts with spike glycoprotein E1. Interacts with spike glycoprotein E2. In terms of processing, structural polyprotein: Specific enzymatic cleavages in vivo yield mature proteins. Capsid protein is auto-cleaved during polyprotein translation, unmasking a signal peptide at the N-terminus of the precursor of E3/E2. The remaining polyprotein is then targeted to the host endoplasmic reticulum, where host signal peptidase cleaves it into pE2, 6K and E1 proteins. pE2 is further processed to mature E3 and E2 by host furin in trans-Golgi vesicle. Post-translationally, palmitoylated via thioester bonds. These palmitoylations may induce disruption of the C-terminus transmembrane. This would result in the reorientation of E2 C-terminus from lumenal to cytoplasmic side. N-glycosylated. In terms of processing, palmitoylated via thioester bonds.

It localises to the virion. Its subcellular location is the host cytoplasm. It is found in the host cell membrane. The protein localises to the host nucleus. The protein resides in the virion membrane. It localises to the host Golgi apparatus. Its subcellular location is the host trans-Golgi network. It is found in the host endoplasmic reticulum. The catalysed reaction is Autocatalytic release of the core protein from the N-terminus of the togavirus structural polyprotein by hydrolysis of a -Trp-|-Ser- bond.. Forms an icosahedral capsid with a T=4 symmetry composed of 240 copies of the capsid protein surrounded by a lipid membrane through which penetrate 80 spikes composed of trimers of E1-E2 heterodimers. The capsid protein binds to the viral RNA genome at a site adjacent to a ribosome binding site for viral genome translation following genome release. Possesses a protease activity that results in its autocatalytic cleavage from the nascent structural protein. Following its self-cleavage, the capsid protein transiently associates with ribosomes, and within several minutes the protein binds to viral RNA and rapidly assembles into icosahedric core particles. The resulting nucleocapsid eventually associates with the cytoplasmic domain of the spike glycoprotein E2 at the cell membrane, leading to budding and formation of mature virions. In case of infection, new virions attach to target cells and after clathrin-mediated endocytosis their membrane fuses with the host endosomal membrane. This leads to the release of the nucleocapsid into the cytoplasm, followed by an uncoating event necessary for the genomic RNA to become accessible. The uncoating might be triggered by the interaction of capsid proteins with ribosomes. Binding of ribosomes would release the genomic RNA since the same region is genomic RNA-binding and ribosome-binding. Specifically inhibits interleukin-1 receptor-associated kinase 1/IRAK1-dependent signaling during viral entry, representing a means by which the alphaviruses may evade innate immune detection and activation prior to viral gene expression. In terms of biological role, provides the signal sequence for the translocation of the precursor of protein E3/E2 to the host endoplasmic reticulum. Furin-cleaved E3 remains associated with spike glycoprotein E1 and mediates pH protection of the latter during the transport via the secretory pathway. After virion release from the host cell, the assembly protein E3 is gradually released in the extracellular space. Its function is as follows. Plays a role in viral attachment to target host cell, by binding to the cell receptors VLDLR or LRP8/APOER2. Synthesized as a pE2 precursor which is processed by furin at the cell membrane just before virion budding, giving rise to E2-E1 heterodimer. The pE2-E1 heterodimer is stable, whereas E2-E1 is unstable and dissociate at low pH. pE2 is processed at the last step, presumably to avoid E1 fusion activation before its final export to cell surface. E2 C-terminus contains a transitory transmembrane that would be disrupted by palmitoylation, resulting in reorientation of the C-terminal tail from lumenal to cytoplasmic side. This step is critical since E2 C-terminus is involved in budding by interacting with capsid proteins. This release of E2 C-terminus in cytoplasm occurs lately in protein export, and precludes premature assembly of particles at the endoplasmic reticulum membrane. Functionally, acts as a viroporin that participates in virus glycoprotein processing and transport to the plasma membrane, cell permeabilization and budding of viral particles. Disrupts the calcium homeostasis of the cell, probably at the endoplasmic reticulum level resulting in the increased levels of cytoplasmic calcium. Because of its lipophilic properties, the 6K protein is postulated to influence the selection of lipids that interact with the transmembrane domains of the glycoproteins, which, in turn, affects the deformability of the bilayer required for the extreme curvature that occurs as budding proceeds. Present in low amount in virions, about 3% compared to viral glycoproteins. Class II viral fusion protein. Fusion activity is inactive as long as E1 is bound to E2 in mature virion. After virus attachment to target cell via host VLDLR or LRP8/APOER2 and endocytosis, acidification of the endosome induces dissociation of E1/E2 heterodimer and concomitant trimerization of the E1 subunits. This E1 trimer is fusion active, and promotes release of viral nucleocapsid in cytoplasm after endosome and viral membrane fusion. Efficient fusion requires the presence of cholesterol and sphingolipid in the target membrane. The polypeptide is Structural polyprotein (Acrocephalus scirpaceus (Eurasian reed-warbler)).